The sequence spans 649 residues: Acetyl-coenzyme A synthetase (649 aa).

Residues 198–201, Thr-317, and Asn-341 each bind CoA; that span reads RRGK. ATP contacts are provided by residues 393–395, 417–422, Asp-506, and Arg-521; these read GEP and DTWWQT. A CoA-binding site is contributed by Ser-529. Residue Arg-532 participates in ATP binding. Mg(2+) is bound by residues Val-543, His-545, and Val-548. At Lys-612 the chain carries N6-acetyllysine. Residues 625-649 are disordered; it reads QPVQGDTSTLEDPTVLERLQASPAL.

Belongs to the ATP-dependent AMP-binding enzyme family. The cofactor is Mg(2+). Post-translationally, acetylated. Deacetylation by the SIR2-homolog deacetylase activates the enzyme.

It carries out the reaction acetate + ATP + CoA = acetyl-CoA + AMP + diphosphate. Catalyzes the conversion of acetate into acetyl-CoA (AcCoA), an essential intermediate at the junction of anabolic and catabolic pathways. AcsA undergoes a two-step reaction. In the first half reaction, AcsA combines acetate with ATP to form acetyl-adenylate (AcAMP) intermediate. In the second half reaction, it can then transfer the acetyl group from AcAMP to the sulfhydryl group of CoA, forming the product AcCoA. In Deinococcus radiodurans (strain ATCC 13939 / DSM 20539 / JCM 16871 / CCUG 27074 / LMG 4051 / NBRC 15346 / NCIMB 9279 / VKM B-1422 / R1), this protein is Acetyl-coenzyme A synthetase.